The primary structure comprises 506 residues: MDLAPRPLGRQHSKSQSAFAFDNTATSIAASTMKNELNHLASTVKDPLAKKAFQKEMDNFFSLFSRYLQEDARGSEINWDLVESPKPEQVVEYDTITEAGGLSRDYLNKLAVLKLNGGLGTTMGCVGPKSIIEVRDGNSFLDLSVRQIEHLNRKYNVNVPFVLMNSFNTDEATAKVIKKYEAHKIDILTFNQSRYPRVHKETLLPVPHTADSAIDEWYPPGHGDVFEALTNSGIIDTLIAQGKEYLFVSNIDNLGAVVDLNILNHMVETNAEYLMELTNKTKADVKGGTLIDYDGNVRLLEIAQVPPQHVEEFKSIKKFKYFNTNNLWFHLPSVKRVVNNHELSMEIIPNKKTIKHKGENINIIQLETAAGAAIRHFKNAHGVNVPRRRFLPVKTCSDLLLVKSDLYSINHGQVEMNPRRFGGTAPLVKLGAHFKKVADFSAHIPSIPKILELDHLTITGDVNIGRNVTLKGTVIIVASDANRIDIPNGSVLENCVITGNLNILEH.

Phosphoserine is present on residues serine 15 and serine 17. Residues 115-118, lysine 129, glutamine 192, and glycine 221 contribute to the UTP site; that span reads LNGG. 117–118 provides a ligand contact to substrate; sequence GG. Residue lysine 129 participates in Mg(2+) binding. Residues histidine 222 and 250-252 contribute to the substrate site; that span reads NID. Aspartate 252 and lysine 394 together coordinate UTP. Aspartate 252 is a Mg(2+) binding site. Lysine 394 is an active-site residue. The interval 455 to 506 is oligomerization; sequence HLTITGDVNIGRNVTLKGTVIIVASDANRIDIPNGSVLENCVITGNLNILEH.

This sequence belongs to the UDPGP type 1 family. Homooctamer.

Its subcellular location is the cytoplasm. The protein resides in the nucleus. The catalysed reaction is alpha-D-glucose 1-phosphate + UTP + H(+) = UDP-alpha-D-glucose + diphosphate. In terms of biological role, plays a central role as a glucosyl donor in cellular metabolic pathways. In Schizosaccharomyces pombe (strain 972 / ATCC 24843) (Fission yeast), this protein is Probable UTP--glucose-1-phosphate uridylyltransferase (fyu1).